Reading from the N-terminus, the 337-residue chain is ATP-dependent 6-phosphofructokinase (337 aa).

G11 lines the ATP pocket. Position 21–25 (21–25) interacts with ADP; it reads RAVVR. ATP contacts are provided by residues 72 to 73 and 102 to 105; these read RY and GDGS. D103 contributes to the Mg(2+) binding site. 125–127 contributes to the substrate binding site; the sequence is TID. Catalysis depends on D127, which acts as the Proton acceptor. R154 lines the ADP pocket. Residues R162 and 169–171 contribute to the substrate site; that span reads MGR. ADP is bound by residues 185–187, K212, and 214–216; these read GAD and KNH. Substrate-binding positions include E223, R245, and 251 to 254; that span reads HILR.

It belongs to the phosphofructokinase type A (PFKA) family. ATP-dependent PFK group I subfamily. Prokaryotic clade 'B1' sub-subfamily. As to quaternary structure, homotetramer. It depends on Mg(2+) as a cofactor.

It is found in the cytoplasm. The enzyme catalyses beta-D-fructose 6-phosphate + ATP = beta-D-fructose 1,6-bisphosphate + ADP + H(+). It functions in the pathway carbohydrate degradation; glycolysis; D-glyceraldehyde 3-phosphate and glycerone phosphate from D-glucose: step 3/4. Its activity is regulated as follows. Allosterically activated by ADP and other diphosphonucleosides, and allosterically inhibited by phosphoenolpyruvate. Functionally, catalyzes the phosphorylation of D-fructose 6-phosphate to fructose 1,6-bisphosphate by ATP, the first committing step of glycolysis. The polypeptide is ATP-dependent 6-phosphofructokinase (Streptococcus pyogenes serotype M28 (strain MGAS6180)).